The chain runs to 56 residues: Large ribosomal subunit protein bL33 (56 aa).

This sequence belongs to the bacterial ribosomal protein bL33 family.

This Actinobacillus succinogenes (strain ATCC 55618 / DSM 22257 / CCUG 43843 / 130Z) protein is Large ribosomal subunit protein bL33.